We begin with the raw amino-acid sequence, 91 residues long: MSEKEQEPILKASDLPEEMQTRIFELSNEAVSNYKIEKDIATYLKKELDQLYGATWHVIVGKSFGSYVTHEQGFFTYFYIGQLAFLIFKSG.

This sequence belongs to the dynein light chain family. Homodimer. Cytoplasmic dynein consists of two catalytic heavy chains (HCs) and a number of non-catalytic subunits which present intermediate chains (ICs), light intermediate chains (LICs) and light chains (LCs). Component of the nuclear pore complex (NPC). NPC constitutes the exclusive means of nucleocytoplasmic transport. NPCs allow the passive diffusion of ions and small molecules and the active, nuclear transport receptor-mediated bidirectional transport of macromolecules such as proteins, RNAs, ribonucleoparticles (RNPs), and ribosomal subunits across the nuclear envelope. Due to its 8-fold rotational symmetry, all subunits are present with 8 copies or multiples thereof.

The protein localises to the cytoplasm. The protein resides in the cytoskeleton. It localises to the nucleus. Its subcellular location is the nuclear pore complex. Acts as one of several non-catalytic accessory components of the cytoplasmic dynein complex that are thought to be involved in linking dynein to cargos and to adapter proteins that regulate dynein function. Cytoplasmic dynein 1 acts as a motor for the intracellular retrograde motility of vesicles and organelles along microtubules. May play a role in changing or maintaining the spatial distribution of cytoskeletal structures. Also a component of the nuclear pore complex. The chain is Dynein light chain 1, cytoplasmic (DYN2) from Debaryomyces hansenii (strain ATCC 36239 / CBS 767 / BCRC 21394 / JCM 1990 / NBRC 0083 / IGC 2968) (Yeast).